The chain runs to 132 residues: Small ribosomal subunit protein uS8 (132 aa).

Belongs to the universal ribosomal protein uS8 family. As to quaternary structure, part of the 30S ribosomal subunit. Contacts proteins S5 and S12.

Its function is as follows. One of the primary rRNA binding proteins, it binds directly to 16S rRNA central domain where it helps coordinate assembly of the platform of the 30S subunit. The chain is Small ribosomal subunit protein uS8 from Rhodopseudomonas palustris (strain HaA2).